Reading from the N-terminus, the 870-residue chain is Lon protease (870 aa).

Residues 1-270 (MPTNSYRFLV…KLYEHIHTFA (270 aa)) enclose the Lon N-terminal domain. 454-461 (GPPGTGKT) is an ATP binding site. Residues 691–870 (SPQIGTVTGL…YQQIYDFIFK (180 aa)) form the Lon proteolytic domain. Residues serine 777 and lysine 820 contribute to the active site.

It belongs to the peptidase S16 family. Homohexamer. Organized in a ring with a central cavity.

The protein resides in the cytoplasm. The enzyme catalyses Hydrolysis of proteins in presence of ATP.. In terms of biological role, ATP-dependent serine protease that mediates the selective degradation of mutant and abnormal proteins as well as certain short-lived regulatory proteins. Required for cellular homeostasis and for survival from DNA damage and developmental changes induced by stress. Degrades polypeptides processively to yield small peptide fragments that are 5 to 10 amino acids long. Binds to DNA in a double-stranded, site-specific manner. The chain is Lon protease from Mesomycoplasma hyopneumoniae (strain 232) (Mycoplasma hyopneumoniae).